The chain runs to 542 residues: ATP synthase subunit beta (542 aa).

Low complexity predominate over residues 1–50 (MAKTPAKAPAAAAKPAAVKKPAAPKAAAAPKAAAVATPAAKKPAAPKAAP). Positions 1–61 (MAKTPAKAPA…SKVAGTREKP (61 aa)) are disordered. 216 to 223 (GGAGVGKT) is a binding site for ATP.

Belongs to the ATPase alpha/beta chains family. F-type ATPases have 2 components, CF(1) - the catalytic core - and CF(0) - the membrane proton channel. CF(1) has five subunits: alpha(3), beta(3), gamma(1), delta(1), epsilon(1). CF(0) has three main subunits: a(1), b(2) and c(9-12). The alpha and beta chains form an alternating ring which encloses part of the gamma chain. CF(1) is attached to CF(0) by a central stalk formed by the gamma and epsilon chains, while a peripheral stalk is formed by the delta and b chains.

The protein resides in the cell inner membrane. The catalysed reaction is ATP + H2O + 4 H(+)(in) = ADP + phosphate + 5 H(+)(out). Functionally, produces ATP from ADP in the presence of a proton gradient across the membrane. The catalytic sites are hosted primarily by the beta subunits. In Caulobacter sp. (strain K31), this protein is ATP synthase subunit beta.